Here is a 210-residue protein sequence, read N- to C-terminus: Uridine kinase P10 (210 aa).

ATP is bound at residue 10–18 (GISGSGKST). D41 is an active-site residue.

The protein belongs to the uridine kinase family. In terms of assembly, interacts with host eIF-2B; this interaction disrupts the interaction between eIF2 and eIF-2B, which leads to the inhibition of stress granules formation.

The protein localises to the host cytoplasm. Its subcellular location is the host perinuclear region. The catalysed reaction is uridine + ATP = UMP + ADP + H(+). Its function is as follows. Inhibits the integrated stress response (ISR) in the infected cell by preventing the sequestration of eIF2B by phosphorylated EIF2S1/eIF-2alpha. Stress granule formation in response to EIF2S1/eIF-2alpha phosphorylation is thus inhibited, which allows protein synthesis and viral replication. Phosphorylates uridine to uridine monophosphate. This is Uridine kinase P10 (ORF10) from Beluga whale coronavirus (strain SW1) (BwCoV).